Here is a 296-residue protein sequence, read N- to C-terminus: Acetylglutamate kinase (296 aa).

Substrate is bound by residues 68–69 (GG), Arg-90, and Asn-193.

This sequence belongs to the acetylglutamate kinase family. ArgB subfamily.

It localises to the cytoplasm. The catalysed reaction is N-acetyl-L-glutamate + ATP = N-acetyl-L-glutamyl 5-phosphate + ADP. It participates in amino-acid biosynthesis; L-arginine biosynthesis; N(2)-acetyl-L-ornithine from L-glutamate: step 2/4. Functionally, catalyzes the ATP-dependent phosphorylation of N-acetyl-L-glutamate. The sequence is that of Acetylglutamate kinase from Acidothermus cellulolyticus (strain ATCC 43068 / DSM 8971 / 11B).